Reading from the N-terminus, the 529-residue chain is Peptide chain release factor 3 (529 aa).

In terms of domain architecture, tr-type G spans A11 to M280. GTP is bound by residues S20–T27, D88–H92, and N142–D145.

This sequence belongs to the TRAFAC class translation factor GTPase superfamily. Classic translation factor GTPase family. PrfC subfamily.

The protein localises to the cytoplasm. Its function is as follows. Increases the formation of ribosomal termination complexes and stimulates activities of RF-1 and RF-2. It binds guanine nucleotides and has strong preference for UGA stop codons. It may interact directly with the ribosome. The stimulation of RF-1 and RF-2 is significantly reduced by GTP and GDP, but not by GMP. This Erwinia tasmaniensis (strain DSM 17950 / CFBP 7177 / CIP 109463 / NCPPB 4357 / Et1/99) protein is Peptide chain release factor 3.